A 382-amino-acid chain; its full sequence is Acetyltransferase eriL (382 aa).

6 helical membrane-spanning segments follow: residues 5–25 (LQPL…LGAV), 33–53 (ALLF…TTTG), 59–79 (IVTW…LLIN), 146–166 (TLFY…SPVF), 192–212 (LWSY…ALGV), and 335–355 (GYMW…DPQF).

The protein belongs to the wax synthase family.

It localises to the membrane. It carries out the reaction cyathatriol + acetyl-CoA = 11-O-acetylcyathatriol + CoA. It catalyses the reaction cyathin A3 + acetyl-CoA = 11-O-acetylcyathin A3 + CoA. It functions in the pathway secondary metabolite biosynthesis. In terms of biological role, acetyltransferase; part of the gene cluster that mediates the biosynthesis of erinacines, cyathane-xylosides that show unique biological activities, including leishmanicidal activity, stimulating activity for nerve growth-factor synthesis, and agonistic activity toward the kappa opioid receptor. Within the pathway, eriL converts cyathatriol into 11-O-acetyl-cyathatriol. EriL is also able to acetylate cyathin A3 to produce 11-O-acetylcyathin A3. The first step of the erinacines biosynthesis pathway is catalyzed by the geranylgeranyl diphosphate (GGPP) synthase eriE via conversion of farnesyl pyrophosphate and isopentyl pyrophosphate into geranylgeranyl pyrophosphate (GGPP). GGPP is then substrate of the diterpene cyclase eriG for the production of cyatha-3,12-diene. The cytochrome P450 monooxygenase eriI then hydroxylates cyatha-3,12-diene at C-14 of the seven-membered ring to produce erinacol, which is further hydroxylated at C-15 by the cytochrome P450 monooxygenase eriC to yield cyathadiol. The cytochrome P450 monooxygenase eriA then catalyzes C-11 hydroxylation in the presence of the short chain dehydrogenase/reductase (SDR) eriH, which leads to the production of cyathatriol. The acetyltransferase eriL converts cyathatriol into 11-O-acetyl-cyathatriol. The SDR eriH catalyzes further oxidation of 11-O-acetyl-cyathatriol into 1-O-acetylcyathin A3. Finally, the glycosyl transferase eriJ tranfers xylose from UDP-xylose onto C-14 of 11-O-acetyl-cyathatriol to form eracine Q. EriJ is also able to convert 11-O-acetyl-cyathatriol to eracine Q2 by using UDP-D-glucose as cosubstrate, but at a lower rate. The protein is Acetyltransferase eriL of Hericium erinaceus (Lion's mane mushroom).